The following is a 433-amino-acid chain: Dihydrolipoyllysine-residue acetyltransferase component of pyruvate dehydrogenase complex (433 aa).

The Lipoyl-binding domain maps to 2-77; the sequence is AFEFRLPDIG…VVGDVIVKID (76 aa). An N6-lipoyllysine modification is found at Lys43. 2 disordered regions span residues 80–134 and 164–204; these read DAEE…PSVR and YLNG…FPET. 2 stretches are compositionally biased toward basic and acidic residues: residues 84–103 and 117–126; these read MQFK…KEQE and EKTEVDESKT. Positions 128-165 constitute a Peripheral subunit-binding (PSBD) domain; it reads KAMPSVRKYARENGVNIKAVNGSGKNGRITKEDIDAYL. Residues 166 to 188 show a composition bias toward low complexity; the sequence is NGGSSEEGSNTSVASESTSSDVV. Residue His404 is part of the active site.

The protein belongs to the 2-oxoacid dehydrogenase family. Forms a 24-polypeptide structural core with octahedral symmetry. (R)-lipoate is required as a cofactor.

It carries out the reaction N(6)-[(R)-dihydrolipoyl]-L-lysyl-[protein] + acetyl-CoA = N(6)-[(R)-S(8)-acetyldihydrolipoyl]-L-lysyl-[protein] + CoA. The pyruvate dehydrogenase complex catalyzes the overall conversion of pyruvate to acetyl-CoA and CO(2). It contains multiple copies of three enzymatic components: pyruvate dehydrogenase (E1), dihydrolipoamide acetyltransferase (E2) and lipoamide dehydrogenase (E3). This Staphylococcus epidermidis (strain ATCC 12228 / FDA PCI 1200) protein is Dihydrolipoyllysine-residue acetyltransferase component of pyruvate dehydrogenase complex (pdhC).